Consider the following 696-residue polypeptide: DNA ligase (696 aa).

Residues 36 to 40, 85 to 86, and Glu-123 contribute to the NAD(+) site; these read DAEYD and SL. Lys-125 functions as the N6-AMP-lysine intermediate in the catalytic mechanism. Residues Arg-146, Glu-181, Lys-319, and Lys-343 each coordinate NAD(+). 4 residues coordinate Zn(2+): Cys-437, Cys-440, Cys-455, and Cys-461. In terms of domain architecture, BRCT spans 618–696; the sequence is PEGTSLAGKT…EDGLKALLGL (79 aa).

Belongs to the NAD-dependent DNA ligase family. LigA subfamily. Mg(2+) serves as cofactor. Requires Mn(2+) as cofactor.

It carries out the reaction NAD(+) + (deoxyribonucleotide)n-3'-hydroxyl + 5'-phospho-(deoxyribonucleotide)m = (deoxyribonucleotide)n+m + AMP + beta-nicotinamide D-nucleotide.. In terms of biological role, DNA ligase that catalyzes the formation of phosphodiester linkages between 5'-phosphoryl and 3'-hydroxyl groups in double-stranded DNA using NAD as a coenzyme and as the energy source for the reaction. It is essential for DNA replication and repair of damaged DNA. This is DNA ligase from Bordetella parapertussis (strain 12822 / ATCC BAA-587 / NCTC 13253).